A 251-amino-acid polypeptide reads, in one-letter code: Xylose/arabinose import ATP-binding protein XylG (251 aa).

In terms of domain architecture, ABC transporter spans 5-241 (LEIRDVHKSF…EITEVMTSFA (237 aa)). 37-44 (GDNGAGKS) is an ATP binding site.

The protein belongs to the ABC transporter superfamily. As to quaternary structure, the complex is composed of two ATP-binding proteins (XylG), two transmembrane proteins (XylH) and a solute-binding protein (XylF).

Its subcellular location is the cell membrane. It catalyses the reaction D-xylose(out) + ATP + H2O = D-xylose(in) + ADP + phosphate + H(+). The enzyme catalyses L-arabinose(out) + ATP + H2O = L-arabinose(in) + ADP + phosphate + H(+). Its function is as follows. Part of the ABC transporter complex XylFGH involved in the uptake of xylose and arabinose. Responsible for energy coupling to the transport system. The polypeptide is Xylose/arabinose import ATP-binding protein XylG (Sulfolobus acidocaldarius (strain ATCC 33909 / DSM 639 / JCM 8929 / NBRC 15157 / NCIMB 11770)).